We begin with the raw amino-acid sequence, 415 residues long: MTTRTPPSGWISRLAQGSLVKQILIGLVLGVLLALVSKPAAIAVGLLGTLFVGALKAVAPVLVLMLVMASIANHQHGQKTSIRPILFLYLLGTFSAALTAVLFSFVFPSTLHLTTAADSITPPSGIVEVLRGLLMSMVSNPIDALLNANYIGILVWAVGLGFALRHGNDTTKNLINDVSHAVTFIVKVVIRFAPLGIFGLVSSTLATTGFETLWGYAQLLLVLVGCMLLVALVINPLLVFWKIRRNPYPLVLTCLRESGVYAFFTRSSAANIPVNMALCEKLNLDRDTYSVSIPLGATINMAGAAITITVLTLAAVHTLNIPVDLPTALLLSVVASLCACGASGVAGGSLLLIPLACNMFGIPNDVAMQVVAVGFIIGVLQDSCETALNSSTDALFTAAACIAEDDQLAKNALRS.

The next 8 membrane-spanning stretches (helical) occupy residues 23 to 43 (ILIGLVLGVLLALVSKPAAIA), 47 to 67 (LGTLFVGALKAVAPVLVLMLV), 85 to 105 (ILFLYLLGTFSAALTAVLFSF), 144 to 164 (ALLNANYIGILVWAVGLGFAL), 181 to 201 (AVTFIVKVVIRFAPLGIFGLV), 220 to 240 (LLVLVGCMLLVALVINPLLVF), 293 to 313 (IPLGATINMAGAAITITVLTL), and 333 to 353 (VVASLCACGASGVAGGSLLLI).

It belongs to the dicarboxylate/amino acid:cation symporter (DAACS) (TC 2.A.23) family.

It is found in the cell inner membrane. It carries out the reaction L-serine(in) + Na(+)(in) = L-serine(out) + Na(+)(out). The catalysed reaction is L-threonine(in) + Na(+)(in) = L-threonine(out) + Na(+)(out). Involved in the import of serine and threonine into the cell, with the concomitant import of sodium (symport system). The protein is Serine/threonine transporter SstT of Klebsiella pneumoniae (strain 342).